The primary structure comprises 123 residues: Large ribosomal subunit protein bL12 (123 aa).

The interval 98–123 (KEGVSKEEAEEIKSKLEDAGATVELK) is disordered. Residues 100–115 (GVSKEEAEEIKSKLED) show a composition bias toward basic and acidic residues.

The protein belongs to the bacterial ribosomal protein bL12 family. As to quaternary structure, homodimer. Part of the ribosomal stalk of the 50S ribosomal subunit. Forms a multimeric L10(L12)X complex, where L10 forms an elongated spine to which 2 to 4 L12 dimers bind in a sequential fashion. Binds GTP-bound translation factors.

Forms part of the ribosomal stalk which helps the ribosome interact with GTP-bound translation factors. Is thus essential for accurate translation. The chain is Large ribosomal subunit protein bL12 from Halothermothrix orenii (strain H 168 / OCM 544 / DSM 9562).